The chain runs to 1112 residues: Zinc finger protein 654 (1112 aa).

The interval 482–514 is disordered; that stretch reads PSSSLKKRVDQQSVEEDQSTGETDPDDASVVQP. Acidic residues predominate over residues 494–508; it reads SVEEDQSTGETDPDD. 5 consecutive C2H2-type zinc fingers follow at residues 566–588, 738–763, 779–801, 807–831, and 836–860; these read FACV…LKNH, FKCP…RTVH, GKCK…LNRH, YFCL…TKSH, and AQCS…EAQH. Disordered regions lie at residues 885 to 906 and 997 to 1018; these read FSNE…KYST and VESQ…NLTS. 2 stretches are compositionally biased toward polar residues: residues 886-899 and 1002-1018; these read SNEN…VSTS and HSAL…NLTS. Phosphoserine occurs at positions 1107 and 1111.

It belongs to the krueppel C2H2-type zinc-finger protein family.

Its subcellular location is the nucleus. May be involved in transcriptional regulation. This Mus musculus (Mouse) protein is Zinc finger protein 654.